The sequence spans 405 residues: Threonine synthase (405 aa).

N6-(pyridoxal phosphate)lysine is present on lysine 106. Residues asparagine 132, 233-237 (GNAGN), and threonine 371 each bind pyridoxal 5'-phosphate.

It belongs to the threonine synthase family. Pyridoxal 5'-phosphate serves as cofactor.

It catalyses the reaction O-phospho-L-homoserine + H2O = L-threonine + phosphate. The protein operates within amino-acid biosynthesis; L-threonine biosynthesis; L-threonine from L-aspartate: step 5/5. In terms of biological role, catalyzes the gamma-elimination of phosphate from L-phosphohomoserine and the beta-addition of water to produce L-threonine. The sequence is that of Threonine synthase (thrC) from Methanocaldococcus jannaschii (strain ATCC 43067 / DSM 2661 / JAL-1 / JCM 10045 / NBRC 100440) (Methanococcus jannaschii).